We begin with the raw amino-acid sequence, 440 residues long: Replication factor C large subunit (440 aa).

Residue Gly-48–Thr-55 participates in ATP binding.

The protein belongs to the activator 1 small subunits family. RfcL subfamily. Heteromultimer composed of small subunits (RfcS) and large subunits (RfcL).

In terms of biological role, part of the RFC clamp loader complex which loads the PCNA sliding clamp onto DNA. The polypeptide is Replication factor C large subunit (Sulfurisphaera tokodaii (strain DSM 16993 / JCM 10545 / NBRC 100140 / 7) (Sulfolobus tokodaii)).